Reading from the N-terminus, the 603-residue chain is DNA mismatch repair protein MutL (603 aa).

It belongs to the DNA mismatch repair MutL/HexB family.

This protein is involved in the repair of mismatches in DNA. It is required for dam-dependent methyl-directed DNA mismatch repair. May act as a 'molecular matchmaker', a protein that promotes the formation of a stable complex between two or more DNA-binding proteins in an ATP-dependent manner without itself being part of a final effector complex. The protein is DNA mismatch repair protein MutL of Sphingopyxis alaskensis (strain DSM 13593 / LMG 18877 / RB2256) (Sphingomonas alaskensis).